The sequence spans 406 residues: S-adenosylmethionine synthase (406 aa).

His-16 provides a ligand contact to ATP. Asp-18 is a Mg(2+) binding site. Glu-44 is a K(+) binding site. L-methionine is bound by residues Glu-57 and Gln-100. The flexible loop stretch occupies residues 100 to 110 (QSVDIAQGVDR). Residues 165–167 (DAK), Asp-241, 247–248 (RK), Ala-264, and Lys-268 each bind ATP. Asp-241 is a binding site for L-methionine. Lys-272 is an L-methionine binding site.

The protein belongs to the AdoMet synthase family. In terms of assembly, homotetramer; dimer of dimers. Requires Mg(2+) as cofactor. It depends on K(+) as a cofactor.

The protein resides in the cytoplasm. It catalyses the reaction L-methionine + ATP + H2O = S-adenosyl-L-methionine + phosphate + diphosphate. It functions in the pathway amino-acid biosynthesis; S-adenosyl-L-methionine biosynthesis; S-adenosyl-L-methionine from L-methionine: step 1/1. In terms of biological role, catalyzes the formation of S-adenosylmethionine (AdoMet) from methionine and ATP. The overall synthetic reaction is composed of two sequential steps, AdoMet formation and the subsequent tripolyphosphate hydrolysis which occurs prior to release of AdoMet from the enzyme. In Chromohalobacter salexigens (strain ATCC BAA-138 / DSM 3043 / CIP 106854 / NCIMB 13768 / 1H11), this protein is S-adenosylmethionine synthase.